A 675-amino-acid chain; its full sequence is DNA ligase (675 aa).

Residues 32–36 (DAEYD), 81–82 (SL), and glutamate 113 each bind NAD(+). Lysine 115 (N6-AMP-lysine intermediate) is an active-site residue. Positions 136, 173, 291, and 315 each coordinate NAD(+). Positions 409, 412, 427, and 433 each coordinate Zn(2+). A BRCT domain is found at 595 to 675 (SEKTYFFNKK…ELNSLIRIKE (81 aa)).

The protein belongs to the NAD-dependent DNA ligase family. LigA subfamily. Requires Mg(2+) as cofactor. The cofactor is Mn(2+).

It carries out the reaction NAD(+) + (deoxyribonucleotide)n-3'-hydroxyl + 5'-phospho-(deoxyribonucleotide)m = (deoxyribonucleotide)n+m + AMP + beta-nicotinamide D-nucleotide.. In terms of biological role, DNA ligase that catalyzes the formation of phosphodiester linkages between 5'-phosphoryl and 3'-hydroxyl groups in double-stranded DNA using NAD as a coenzyme and as the energy source for the reaction. It is essential for DNA replication and repair of damaged DNA. This is DNA ligase from Buchnera aphidicola subsp. Acyrthosiphon pisum (strain APS) (Acyrthosiphon pisum symbiotic bacterium).